Here is a 223-residue protein sequence, read N- to C-terminus: ATP synthase subunit a 1 (223 aa).

5 consecutive transmembrane segments (helical) span residues 20 to 40 (LTIA…AFAS), 78 to 98 (YLPY…CTII), 108 to 128 (LSTT…FGIA), 174 to 194 (MILA…MSVL), and 196 to 216 (LLTG…YISA).

It belongs to the ATPase A chain family. In terms of assembly, F-type ATPases have 2 components, CF(1) - the catalytic core - and CF(0) - the membrane proton channel. CF(1) has five subunits: alpha(3), beta(3), gamma(1), delta(1), epsilon(1). CF(0) has four main subunits: a, b, b' and c.

It localises to the cell inner membrane. Its function is as follows. Key component of the proton channel; it plays a direct role in the translocation of protons across the membrane. In Chlorobium luteolum (strain DSM 273 / BCRC 81028 / 2530) (Pelodictyon luteolum), this protein is ATP synthase subunit a 1.